The sequence spans 461 residues: Cysteine--tRNA ligase (461 aa).

Cys-31 contributes to the Zn(2+) binding site. Positions 33–43 (PTVYDFAHIGN) match the 'HIGH' region motif. Cys-219, His-244, and Glu-248 together coordinate Zn(2+). The short motif at 277 to 281 (KMSKS) is the 'KMSKS' region element. Residue Lys-280 participates in ATP binding. Basic and acidic residues predominate over residues 436–452 (SEKGIQLKDGKDKETGE). The disordered stretch occupies residues 436–461 (SEKGIQLKDGKDKETGERTTTWELKR).

The protein belongs to the class-I aminoacyl-tRNA synthetase family. In terms of assembly, monomer. It depends on Zn(2+) as a cofactor.

Its subcellular location is the cytoplasm. The enzyme catalyses tRNA(Cys) + L-cysteine + ATP = L-cysteinyl-tRNA(Cys) + AMP + diphosphate. The chain is Cysteine--tRNA ligase from Agrobacterium fabrum (strain C58 / ATCC 33970) (Agrobacterium tumefaciens (strain C58)).